The primary structure comprises 334 residues: Phospho-N-acetylmuramoyl-pentapeptide-transferase (334 aa).

10 helical membrane-spanning segments follow: residues 11–31, 55–75, 84–104, 124–144, 158–178, 184–204, 205–225, 233–253, 258–278, and 311–331; these read GAGL…IPLM, PTMG…IFAP, LIIA…DDYI, VGLA…GTAV, PLYY…VNFA, LLGG…ALAL, GQTD…GFLH, IFMG…LAVL, FLLV…ILQV, and LFWG…PGML.

This sequence belongs to the glycosyltransferase 4 family. MraY subfamily. Requires Mg(2+) as cofactor.

The protein resides in the cell membrane. It carries out the reaction UDP-N-acetyl-alpha-D-muramoyl-L-alanyl-gamma-D-glutamyl-meso-2,6-diaminopimeloyl-D-alanyl-D-alanine + di-trans,octa-cis-undecaprenyl phosphate = di-trans,octa-cis-undecaprenyl diphospho-N-acetyl-alpha-D-muramoyl-L-alanyl-D-glutamyl-meso-2,6-diaminopimeloyl-D-alanyl-D-alanine + UMP. Its pathway is cell wall biogenesis; peptidoglycan biosynthesis. In terms of biological role, catalyzes the initial step of the lipid cycle reactions in the biosynthesis of the cell wall peptidoglycan: transfers peptidoglycan precursor phospho-MurNAc-pentapeptide from UDP-MurNAc-pentapeptide onto the lipid carrier undecaprenyl phosphate, yielding undecaprenyl-pyrophosphoryl-MurNAc-pentapeptide, known as lipid I. This Symbiobacterium thermophilum (strain DSM 24528 / JCM 14929 / IAM 14863 / T) protein is Phospho-N-acetylmuramoyl-pentapeptide-transferase.